A 233-amino-acid chain; its full sequence is H-2 class II histocompatibility antigen, A-S alpha chain (233 aa).

Residues 1 to 88 (EDDIEADHVG…KRSNSTPATN (88 aa)) form an alpha-1 region. The Extracellular portion of the chain corresponds to 1 to 195 (EDDIEADHVG…IPAPMSELTE (195 aa)). Positions 89 to 182 (EAPQATVFPK…GLEEPVLKHW (94 aa)) are alpha-2. The region spanning 91 to 183 (PQATVFPKSP…LEEPVLKHWE (93 aa)) is the Ig-like C1-type domain. An intrachain disulfide couples Cys-111 to Cys-167. An N-linked (GlcNAc...) asparagine glycan is attached at Asn-122. Positions 183-195 (EPEIPAPMSELTE) are connecting peptide. The helical transmembrane segment at 196–221 (TVVCALGLSVGLVGIVVGTIFIIQGL) threads the bilayer. At 222-233 (RSGGTSRHPGPL) the chain is on the cytoplasmic side.

This sequence belongs to the MHC class II family.

Its subcellular location is the membrane. This Mus musculus (Mouse) protein is H-2 class II histocompatibility antigen, A-S alpha chain (H2-Aa).